A 250-amino-acid chain; its full sequence is ATP synthase subunit a (250 aa).

Transmembrane regions (helical) follow at residues 26 to 46, 84 to 104, 114 to 134, 143 to 163, 193 to 213, and 216 to 236; these read FTNA…FLYF, FFPL…LGMF, IIVT…YGFY, VFVP…IEII, FVAS…LPLI, and VALT…FAVL.

It belongs to the ATPase A chain family. In terms of assembly, F-type ATPases have 2 components, CF(1) - the catalytic core - and CF(0) - the membrane proton channel. CF(1) has five subunits: alpha(3), beta(3), gamma(1), delta(1), epsilon(1). CF(0) has three main subunits: a(1), b(2) and c(9-12). The alpha and beta chains form an alternating ring which encloses part of the gamma chain. CF(1) is attached to CF(0) by a central stalk formed by the gamma and epsilon chains, while a peripheral stalk is formed by the delta and b chains.

The protein localises to the cell inner membrane. In terms of biological role, key component of the proton channel; it plays a direct role in the translocation of protons across the membrane. This Rhizobium etli (strain ATCC 51251 / DSM 11541 / JCM 21823 / NBRC 15573 / CFN 42) protein is ATP synthase subunit a.